We begin with the raw amino-acid sequence, 170 residues long: NADH-quinone oxidoreductase subunit B (170 aa).

4 residues coordinate [4Fe-4S] cluster: C37, C38, C102, and C131.

It belongs to the complex I 20 kDa subunit family. As to quaternary structure, NDH-1 is composed of 14 different subunits. Subunits NuoB, C, D, E, F, and G constitute the peripheral sector of the complex. Requires [4Fe-4S] cluster as cofactor.

Its subcellular location is the cell inner membrane. The enzyme catalyses a quinone + NADH + 5 H(+)(in) = a quinol + NAD(+) + 4 H(+)(out). In terms of biological role, NDH-1 shuttles electrons from NADH, via FMN and iron-sulfur (Fe-S) centers, to quinones in the respiratory chain. The immediate electron acceptor for the enzyme in this species is believed to be ubiquinone. Couples the redox reaction to proton translocation (for every two electrons transferred, four hydrogen ions are translocated across the cytoplasmic membrane), and thus conserves the redox energy in a proton gradient. The chain is NADH-quinone oxidoreductase subunit B from Geobacter metallireducens (strain ATCC 53774 / DSM 7210 / GS-15).